Reading from the N-terminus, the 464-residue chain is Transcription factor EAT1 (464 aa).

The basic motif; degenerate stretch occupies residues 261 to 274 (GKGKANFATERERR). The bHLH domain maps to 261–310 (GKGKANFATERERREQLNVKFRTLRMLFPNPTKNDRASIVGDAIEYIDEL). The interval 275-310 (EQLNVKFRTLRMLFPNPTKNDRASIVGDAIEYIDEL) is helix-loop-helix motif. A disordered region spans residues 338-357 (QEAAADGESSSMRPVRDDQD).

Belongs to the bHLH protein family. In terms of assembly, interacts with TDR.

It is found in the nucleus. Functionally, transcription factor involved in the regulation of tapetum programmed cell death (PCD) and degradation during male reproductive development. Interacts with TDR and promote tapetal PCD by regulating the expression of RTS, and the two lipid-transfer proteins C4 and C6, which function in microspore development. Acts downstream from and interacts with TDR in the regulation of tapetal PCD. Regulates directly the aspartic protease AP25 and AP37 during tapetal PCD. May not target the cysteine protease CP1. This Oryza sativa subsp. japonica (Rice) protein is Transcription factor EAT1.